An 827-amino-acid chain; its full sequence is Transcription factor SOX-6 (827 aa).

Over residues 1–10 (MSSKQATSPF) the composition is skewed to polar residues. The interval 1 to 51 (MSSKQATSPFACTVDGEETMTQDLTSREKEEGSDQHPASHLPLHPIMHNKP) is disordered. The segment covering 25–34 (TSREKEEGSD) has biased composition (basic and acidic residues). A Phosphothreonine modification is found at threonine 119. A coiled-coil region spans residues 184-257 (LAEKERQLST…QHKINLLQQQ (74 aa)). 2 disordered regions span residues 329 to 360 (HVSH…GGHS) and 380 to 470 (SPGA…PIGG). Basic and acidic residues predominate over residues 341 to 357 (GISDRLGRNLDPYEHGG). Residue serine 399 is modified to Phosphoserine. A Phosphothreonine modification is found at threonine 401. Glycyl lysine isopeptide (Lys-Gly) (interchain with G-Cter in SUMO) cross-links involve residues lysine 404 and lysine 417. 2 stretches are compositionally biased toward polar residues: residues 421-431 (TAQPLNLSSRP) and 439-461 (SPTS…LPNK). Phosphoserine is present on residues serine 439 and serine 442. The segment at residues 620-688 (IKRPMNAFMV…IHLEKYPNYK (69 aa)) is a DNA-binding region (HMG box). 2 disordered regions span residues 752–772 (TPSP…EPSL) and 786–827 (ASLA…VSAN). Over residues 795–808 (NGEDEMEAYDDYED) the composition is skewed to acidic residues.

As to quaternary structure, homodimer. Interacts with DAZAP2. May interact with CENPK. In terms of processing, sumoylation inhibits the transcriptional activity.

Its subcellular location is the nucleus. It is found in the cytoplasm. Functionally, transcription factor that plays a key role in several developmental processes, including neurogenesis, chondrocytes differentiation and cartilage formation. Specifically binds the 5'-AACAAT-3' DNA motif present in enhancers and super-enhancers and promotes expression of genes important for chondrogenesis. Required for overt chondrogenesis when condensed prechondrocytes differentiate into early stage chondrocytes: SOX5 and SOX6 cooperatively bind with SOX9 on active enhancers and super-enhancers associated with cartilage-specific genes, and thereby potentiate SOX9's ability to transactivate. Not involved in precartilaginous condensation, the first step in chondrogenesis, during which skeletal progenitors differentiate into prechondrocytes. Together with SOX5, required to form and maintain a pool of highly proliferating chondroblasts between epiphyses and metaphyses, to form columnar chondroblasts, delay chondrocyte prehypertrophy but promote hypertrophy, and to delay terminal differentiation of chondrocytes on contact with ossification fronts. Binds to the proximal promoter region of the myelin protein MPZ gene, and is thereby involved in the differentiation of oligodendroglia in the developing spinal tube. Binds to the gene promoter of MBP and acts as a transcriptional repressor. The sequence is that of Transcription factor SOX-6 from Rattus norvegicus (Rat).